A 315-amino-acid polypeptide reads, in one-letter code: Putative ankyrin repeat protein R600 (315 aa).

5 ANK repeats span residues 79 to 108, 118 to 152, 153 to 182, 184 to 211, and 212 to 240; these read NECRYFRMAVYNNSYDIAKYLLENGANVHV, SGFGKFYVFHSEKKEKRDTVELVKLLIDYNAMVGT, DTCNLVHTAIDANRLDVVKILVENGADIFS, QSKLLKSAVMYNYDILEYLISQGIDVTD, and DNNSVLKFAVSRGYDCVDLLLDAGADMNT.

The polypeptide is Putative ankyrin repeat protein R600 (Acanthamoeba polyphaga mimivirus (APMV)).